The sequence spans 832 residues: Protein P (832 aa).

The segment at 1–177 (MPLSYQHFRK…FCGSPYSWEQ (177 aa)) is terminal protein domain (TP). The tract at residues 178-335 (ELQHGAESFH…YCLSHLVSLL (158 aa)) is spacer. The polymerase/reverse transcriptase domain (RT) stretch occupies residues 336 to 679 (DDWGPCTEHG…YSTLYPVARQ (344 aa)). One can recognise a Reverse transcriptase domain in the interval 346 to 589 (EHHIRIPRTP…YSLHFMGYVI (244 aa)). Residues aspartate 418, aspartate 540, and aspartate 541 each coordinate Mg(2+).

Belongs to the hepadnaviridae P protein family.

It carries out the reaction DNA(n) + a 2'-deoxyribonucleoside 5'-triphosphate = DNA(n+1) + diphosphate. The enzyme catalyses Endonucleolytic cleavage to 5'-phosphomonoester.. Activated by host HSP70 and HSP40 in vitro to be able to bind the epsilon loop of the pgRNA. Because deletion of the RNase H region renders the protein partly chaperone-independent, the chaperones may be needed indirectly to relieve occlusion of the RNA-binding site by this domain. Inhibited by several reverse-transcriptase inhibitors: Lamivudine, Adefovir and Entecavir. Multifunctional enzyme that converts the viral RNA genome into dsDNA in viral cytoplasmic capsids. This enzyme displays a DNA polymerase activity that can copy either DNA or RNA templates, and a ribonuclease H (RNase H) activity that cleaves the RNA strand of RNA-DNA heteroduplexes in a partially processive 3'- to 5'-endonucleasic mode. Neo-synthesized pregenomic RNA (pgRNA) are encapsidated together with the P protein, and reverse-transcribed inside the nucleocapsid. Initiation of reverse-transcription occurs first by binding the epsilon loop on the pgRNA genome, and is initiated by protein priming, thereby the 5'-end of (-)DNA is covalently linked to P protein. Partial (+)DNA is synthesized from the (-)DNA template and generates the relaxed circular DNA (RC-DNA) genome. After budding and infection, the RC-DNA migrates in the nucleus, and is converted into a plasmid-like covalently closed circular DNA (cccDNA). The activity of P protein does not seem to be necessary for cccDNA generation, and is presumably released from (+)DNA by host nuclear DNA repair machinery. This Pan troglodytes (Chimpanzee) protein is Protein P.